The following is a 354-amino-acid chain: Methylthioribose-1-phosphate isomerase (354 aa).

Substrate is bound by residues 49-51, R92, and Q199; that span reads RGA. D240 functions as the Proton donor in the catalytic mechanism. 250–251 contacts substrate; that stretch reads NK.

Belongs to the eIF-2B alpha/beta/delta subunits family. MtnA subfamily.

It carries out the reaction 5-(methylsulfanyl)-alpha-D-ribose 1-phosphate = 5-(methylsulfanyl)-D-ribulose 1-phosphate. It participates in amino-acid biosynthesis; L-methionine biosynthesis via salvage pathway; L-methionine from S-methyl-5-thio-alpha-D-ribose 1-phosphate: step 1/6. Catalyzes the interconversion of methylthioribose-1-phosphate (MTR-1-P) into methylthioribulose-1-phosphate (MTRu-1-P). In Koribacter versatilis (strain Ellin345), this protein is Methylthioribose-1-phosphate isomerase.